The primary structure comprises 106 residues: Thioredoxin-2 (106 aa).

Residues 2 to 106 (VYQIKDKADL…RLEDVIKANI (105 aa)) form the Thioredoxin domain. Residues C32 and C35 each act as nucleophile in the active site. A disulfide bridge connects residues C32 and C35.

Belongs to the thioredoxin family.

Its function is as follows. Participates in various redox reactions through the reversible oxidation of its active center dithiol to a disulfide and catalyzes dithiol-disulfide exchange reactions. As a reducing substrate of peroxiredoxin 1, thioredoxin 2 is preferred over thioredoxin 1. The protein is Thioredoxin-2 of Drosophila yakuba (Fruit fly).